Here is a 148-residue protein sequence, read N- to C-terminus: UPF0260 protein PM0539 (148 aa).

The protein belongs to the UPF0260 family.

The chain is UPF0260 protein PM0539 from Pasteurella multocida (strain Pm70).